An 82-amino-acid polypeptide reads, in one-letter code: Omega-conotoxin-like TxO6 (82 aa).

The first 22 residues, 1–22, serve as a signal peptide directing secretion; it reads MKLTCVVIVAVLFLTAWTLVMA. Positions 23–50 are excised as a propeptide; it reads DDSNNGLANLFSKSRDEMEDPEAAKLEK. Disulfide bonds link cysteine 53-cysteine 71, cysteine 60-cysteine 76, and cysteine 70-cysteine 81.

The protein belongs to the conotoxin O1 superfamily. Expressed by the venom duct.

The protein localises to the secreted. Omega-conotoxins act at presynaptic membranes, they bind and block voltage-gated calcium channels (Cav). This chain is Omega-conotoxin-like TxO6, found in Conus textile (Cloth-of-gold cone).